The sequence spans 555 residues: E3 ubiquitin-protein ligase ARIH1 (555 aa).

A compositionally biased stretch (acidic residues) spans 1–47 (MDSDEGYNYEFDEDEECSEEDSGAEEEEDDDEDEPDDDNLDLGEVEL). The interval 1–93 (MDSDEGYNYE…GGGGGPGHEQ (93 aa)) is disordered. Positions 65-90 (ETGGGGGSALGPGGGGGGGGGGGGPG) are enriched in gly residues. The interval 103–151 (TAEQILQHMVECIREVNEVIQNPATITRILLSHFNWDKEKLMERYFDGN) is UBA-like. At lysine 140 the chain carries N6-acetyllysine. The segment at 180-391 (QDMPCQICYL…SAWYNCNRYN (212 aa)) is TRIAD supradomain. 18 residues coordinate Zn(2+): cysteine 184, cysteine 187, cysteine 201, histidine 203, cysteine 206, cysteine 209, cysteine 229, cysteine 234, cysteine 274, cysteine 279, cysteine 295, cysteine 297, cysteine 302, cysteine 305, histidine 310, cysteine 315, cysteine 342, and cysteine 345. Residues 184 to 234 (CQICYLNYPNSYFTGLECGHKFCMQCWSEYLTTKIMEEGMGQTISCPAHGC) form an RING-type 1 zinc finger. An IBR-type zinc finger spans residues 254-315 (LKYQHLITNS…GENWHDPVKC (62 aa)). The segment at 342–373 (CPKCHVTIEKDGGCNHMVCRNQNCKAEFCWVC) adopts an RING-type 2; atypical zinc-finger fold. Cysteine 355 is a catalytic residue. Zn(2+) is bound by residues cysteine 360, cysteine 365, cysteine 370, cysteine 373, histidine 380, and cysteine 387. Positions 406–555 (RAALQRYLFY…EKDLWEYIED (150 aa)) are ariadne domain.

It belongs to the RBR family. Ariadne subfamily. In terms of assembly, interacts (via the first RING-type zinc finger) with UBE2L3. Associates with cullin-RING ubiquitin ligase (CRL) complexes containing CUL1, CUL2 and CUL3. Interacts with neddylated CUL1. Interacts with neddylated CUL2. Interacts with neddylated CUL3. Interacts with neddylated CUL4A. Widely expressed.

It localises to the cytoplasm. The protein localises to the nucleus. The protein resides in the cajal body. The enzyme catalyses [E2 ubiquitin-conjugating enzyme]-S-ubiquitinyl-L-cysteine + [acceptor protein]-L-lysine = [E2 ubiquitin-conjugating enzyme]-L-cysteine + [acceptor protein]-N(6)-ubiquitinyl-L-lysine.. It functions in the pathway protein modification; protein ubiquitination. Autoinhibited by the ariadne domain, which masks the second RING-type zinc finger that contains the active site and inhibits the E3 activity. Inhibition is relieved upon binding to neddylated cullin-RING ubiquitin ligase complexes, which activate the E3 ligase activity of ARIH1. E3 ubiquitin-protein ligase, which catalyzes ubiquitination of target proteins together with ubiquitin-conjugating enzyme E2 UBE2L3. Acts as an atypical E3 ubiquitin-protein ligase by working together with cullin-RING ubiquitin ligase (CRL) complexes and initiating ubiquitination of CRL substrates: associates with CRL complexes and specifically mediates addition of the first ubiquitin on CRLs targets. The initial ubiquitin is then elongated by CDC34/UBE2R1 and UBE2R2. E3 ubiquitin-protein ligase activity is activated upon binding to neddylated cullin-RING ubiquitin ligase complexes. Plays a role in protein translation in response to DNA damage by mediating ubiquitination of EIF4E2, the consequences of EIF4E2 ubiquitination are however unclear. According to a report, EIF4E2 ubiquitination leads to promote EIF4E2 cap-binding and protein translation arrest. According to another report EIF4E2 ubiquitination leads to its subsequent degradation. Acts as the ligase involved in ISGylation of EIF4E2. In vitro, controls the degradation of the LINC (LInker of Nucleoskeleton and Cytoskeleton) complex member SUN2 and may therefore have a role in the formation and localization of the LINC complex, and as a consequence, may act in nuclear subcellular localization and nuclear morphology. The chain is E3 ubiquitin-protein ligase ARIH1 (Arih1) from Mus musculus (Mouse).